The primary structure comprises 863 residues: Leucine--tRNA ligase (863 aa).

The 'HIGH' region motif lies at 42 to 52; that stretch reads PYPSGRLHMGH. Positions 622–626 match the 'KMSKS' region motif; sequence KMSKS. ATP is bound at residue Lys-625.

The protein belongs to the class-I aminoacyl-tRNA synthetase family.

The protein localises to the cytoplasm. It carries out the reaction tRNA(Leu) + L-leucine + ATP = L-leucyl-tRNA(Leu) + AMP + diphosphate. The sequence is that of Leucine--tRNA ligase from Shewanella denitrificans (strain OS217 / ATCC BAA-1090 / DSM 15013).